We begin with the raw amino-acid sequence, 380 residues long: Cytochrome b (380 aa).

4 helical membrane-spanning segments follow: residues 34–54, 78–99, 114–134, and 179–199; these read FGSL…LLAA, WLIR…YLHI, WNTG…GYVL, and FFAL…IHLT. Residues histidine 84 and histidine 98 each contribute to the heme b site. The heme b site is built by histidine 183 and histidine 197. Histidine 202 provides a ligand contact to a ubiquinone. Transmembrane regions (helical) follow at residues 227 to 247, 289 to 309, 321 to 341, and 348 to 368; these read LKDI…ALFS, LGGV…PFLH, LSQL…WVGS, and FIII…VLFP.

Belongs to the cytochrome b family. The cytochrome bc1 complex contains 11 subunits: 3 respiratory subunits (MT-CYB, CYC1 and UQCRFS1), 2 core proteins (UQCRC1 and UQCRC2) and 6 low-molecular weight proteins (UQCRH/QCR6, UQCRB/QCR7, UQCRQ/QCR8, UQCR10/QCR9, UQCR11/QCR10 and a cleavage product of UQCRFS1). This cytochrome bc1 complex then forms a dimer. Heme b serves as cofactor.

It is found in the mitochondrion inner membrane. In terms of biological role, component of the ubiquinol-cytochrome c reductase complex (complex III or cytochrome b-c1 complex) that is part of the mitochondrial respiratory chain. The b-c1 complex mediates electron transfer from ubiquinol to cytochrome c. Contributes to the generation of a proton gradient across the mitochondrial membrane that is then used for ATP synthesis. This is Cytochrome b (MT-CYB) from Pharomachrus antisianus (Crested quetzal).